The primary structure comprises 244 residues: tRNA (guanine-N(7)-)-methyltransferase (244 aa).

A compositionally biased stretch (polar residues) spans Met1–Gln10. Positions Met1–Arg20 are disordered. 4 residues coordinate S-adenosyl-L-methionine: Glu74, Glu99, Asp126, and Asp149. The active site involves Asp149. Substrate-binding positions include Lys153, Asp185, and Thr222–Glu225.

Belongs to the class I-like SAM-binding methyltransferase superfamily. TrmB family.

The catalysed reaction is guanosine(46) in tRNA + S-adenosyl-L-methionine = N(7)-methylguanosine(46) in tRNA + S-adenosyl-L-homocysteine. It participates in tRNA modification; N(7)-methylguanine-tRNA biosynthesis. In terms of biological role, catalyzes the formation of N(7)-methylguanine at position 46 (m7G46) in tRNA. This is tRNA (guanine-N(7)-)-methyltransferase from Pseudomonas aeruginosa (strain ATCC 15692 / DSM 22644 / CIP 104116 / JCM 14847 / LMG 12228 / 1C / PRS 101 / PAO1).